Here is a 298-residue protein sequence, read N- to C-terminus: Arginase (298 aa).

His-98, Asp-121, His-123, and Asp-125 together coordinate Mn(2+). Residues 123-127, 134-136, and Asp-177 each bind substrate; these read HGDLN and SGN. Positions 225 and 227 each coordinate Mn(2+). Substrate-binding residues include Thr-239 and Glu-270.

This sequence belongs to the arginase family. Mn(2+) is required as a cofactor.

The catalysed reaction is L-arginine + H2O = urea + L-ornithine. Its pathway is nitrogen metabolism; urea cycle; L-ornithine and urea from L-arginine: step 1/1. This Brevibacillus brevis (Bacillus brevis) protein is Arginase (rocF).